Consider the following 226-residue polypeptide: Phosphatidylserine decarboxylase proenzyme (226 aa).

Ser184 acts as the Schiff-base intermediate with substrate; via pyruvic acid in catalysis. Residue Ser184 is modified to Pyruvic acid (Ser); by autocatalysis.

Belongs to the phosphatidylserine decarboxylase family. PSD-A subfamily. In terms of assembly, heterodimer of a large membrane-associated beta subunit and a small pyruvoyl-containing alpha subunit. Requires pyruvate as cofactor. In terms of processing, is synthesized initially as an inactive proenzyme. Formation of the active enzyme involves a self-maturation process in which the active site pyruvoyl group is generated from an internal serine residue via an autocatalytic post-translational modification. Two non-identical subunits are generated from the proenzyme in this reaction, and the pyruvate is formed at the N-terminus of the alpha chain, which is derived from the carboxyl end of the proenzyme. The post-translation cleavage follows an unusual pathway, termed non-hydrolytic serinolysis, in which the side chain hydroxyl group of the serine supplies its oxygen atom to form the C-terminus of the beta chain, while the remainder of the serine residue undergoes an oxidative deamination to produce ammonia and the pyruvoyl prosthetic group on the alpha chain.

The protein resides in the cell membrane. It carries out the reaction a 1,2-diacyl-sn-glycero-3-phospho-L-serine + H(+) = a 1,2-diacyl-sn-glycero-3-phosphoethanolamine + CO2. It functions in the pathway phospholipid metabolism; phosphatidylethanolamine biosynthesis; phosphatidylethanolamine from CDP-diacylglycerol: step 2/2. Its function is as follows. Catalyzes the formation of phosphatidylethanolamine (PtdEtn) from phosphatidylserine (PtdSer). The polypeptide is Phosphatidylserine decarboxylase proenzyme (Ehrlichia canis (strain Jake)).